The following is a 188-amino-acid chain: Probable RNA 2'-phosphotransferase (188 aa).

It belongs to the KptA/TPT1 family.

Functionally, removes the 2'-phosphate from RNA via an intermediate in which the phosphate is ADP-ribosylated by NAD followed by a presumed transesterification to release the RNA and generate ADP-ribose 1''-2''-cyclic phosphate (APPR&gt;P). May function as an ADP-ribosylase. This is Probable RNA 2'-phosphotransferase from Lacticaseibacillus paracasei (strain ATCC 334 / BCRC 17002 / CCUG 31169 / CIP 107868 / KCTC 3260 / NRRL B-441) (Lactobacillus paracasei).